Here is a 155-residue protein sequence, read N- to C-terminus: Ribonuclease H (155 aa).

An RNase H type-1 domain is found at 1–146; that stretch reads MNALFAWTDG…ADELARAGMA (146 aa). Residues D9, E52, D74, and D138 each contribute to the Mg(2+) site.

It belongs to the RNase H family. Monomer. Mg(2+) is required as a cofactor.

Its subcellular location is the cytoplasm. The enzyme catalyses Endonucleolytic cleavage to 5'-phosphomonoester.. In terms of biological role, endonuclease that specifically degrades the RNA of RNA-DNA hybrids. This is Ribonuclease H from Paracoccus denitrificans (strain Pd 1222).